Reading from the N-terminus, the 247-residue chain is 2,3-bisphosphoglycerate-dependent phosphoglycerate mutase (247 aa).

Residues 8–15 (RHGESTWN), 21–22 (TG), Arg-60, 87–90 (ERHY), Lys-98, 114–115 (RR), and 183–184 (GN) contribute to the substrate site. The active-site Tele-phosphohistidine intermediate is the His-9. The Proton donor/acceptor role is filled by Glu-87.

The protein belongs to the phosphoglycerate mutase family. BPG-dependent PGAM subfamily. Homodimer.

The enzyme catalyses (2R)-2-phosphoglycerate = (2R)-3-phosphoglycerate. The protein operates within carbohydrate degradation; glycolysis; pyruvate from D-glyceraldehyde 3-phosphate: step 3/5. Its function is as follows. Catalyzes the interconversion of 2-phosphoglycerate and 3-phosphoglycerate. This is 2,3-bisphosphoglycerate-dependent phosphoglycerate mutase from Acidovorax sp. (strain JS42).